A 318-amino-acid chain; its full sequence is Replication factor C small subunit (318 aa).

43–50 (GSVGTGKT) lines the ATP pocket.

It belongs to the activator 1 small subunits family. RfcS subfamily. As to quaternary structure, heteromultimer composed of small subunits (RfcS) and large subunits (RfcL).

Part of the RFC clamp loader complex which loads the PCNA sliding clamp onto DNA. This Thermoplasma acidophilum (strain ATCC 25905 / DSM 1728 / JCM 9062 / NBRC 15155 / AMRC-C165) protein is Replication factor C small subunit.